We begin with the raw amino-acid sequence, 160 residues long: Endoribonuclease YbeY (160 aa).

Residues His112, His116, and His122 each contribute to the Zn(2+) site. The segment at 141–160 (ELGHPDPYACDDEEPPSKEK) is disordered.

Belongs to the endoribonuclease YbeY family. Requires Zn(2+) as cofactor.

The protein localises to the cytoplasm. Single strand-specific metallo-endoribonuclease involved in late-stage 70S ribosome quality control and in maturation of the 3' terminus of the 16S rRNA. In Pseudomonas paraeruginosa (strain DSM 24068 / PA7) (Pseudomonas aeruginosa (strain PA7)), this protein is Endoribonuclease YbeY.